The chain runs to 328 residues: D-cysteine desulfhydrase (328 aa).

At K51 the chain carries N6-(pyridoxal phosphate)lysine.

This sequence belongs to the ACC deaminase/D-cysteine desulfhydrase family. As to quaternary structure, homodimer. Pyridoxal 5'-phosphate serves as cofactor.

It carries out the reaction D-cysteine + H2O = hydrogen sulfide + pyruvate + NH4(+) + H(+). Functionally, catalyzes the alpha,beta-elimination reaction of D-cysteine and of several D-cysteine derivatives. It could be a defense mechanism against D-cysteine. The chain is D-cysteine desulfhydrase from Escherichia coli O6:H1 (strain CFT073 / ATCC 700928 / UPEC).